Consider the following 474-residue polypeptide: MSRLVVVSNRIAPPDDKKSSAGGLAVGILGALKAAGGLWFGWSGEIGNEDAPLKKVTRDNITWASFNLSEQDHDQYYNQFSNGVLWPAFHYRLDLVNFQREAWEGYLRVNSLLADKLKPLIEPDDNLWIHDYHLLPFASELRKRGVNNRIGFFLHIPFPTPEIFNALPTNTELLEQLCDYDLLGFQTENDRTAFLDCLAMQTHLSTSSDGEYTAYGKTFRTEVYPIGIEPEEIAQASAGPLPPKLAQLKAELASVKNIFSVERLDYSKGLPERFQAFETLLEKYPEHHGKIRYTQIAPTSRGDVQAYQDIRHQLETEAGRINGKYGQLGWTPLYYLNQHFDRKLLMKVFRYSDVGLVTPLRDGMNLVAKEYVAAQDPKNPGVLVLSQFAGAANELTAALLVNPYDRDDVAAALDRALKMPLAERIARHSEMLEIVRKNDINHWQEAFIKDLKQVTPRSPERELQNKVATFPKLA.

A D-glucose 6-phosphate-binding site is contributed by arginine 10. Position 22–23 (22–23 (GG)) interacts with UDP-alpha-D-glucose. D-glucose 6-phosphate-binding residues include tyrosine 77 and aspartate 131. UDP-alpha-D-glucose is bound by residues arginine 263 and lysine 268. Arginine 301 lines the D-glucose 6-phosphate pocket. UDP-alpha-D-glucose-binding positions include phenylalanine 340 and 366–370 (LVAKE).

This sequence belongs to the glycosyltransferase 20 family. In terms of assembly, homotetramer.

It catalyses the reaction D-glucose 6-phosphate + UDP-alpha-D-glucose = alpha,alpha-trehalose 6-phosphate + UDP + H(+). It participates in glycan biosynthesis; trehalose biosynthesis. In terms of biological role, probably involved in the osmoprotection via the biosynthesis of trehalose. Catalyzes the transfer of glucose from UDP-alpha-D-glucose (UDP-Glc) to D-glucose 6-phosphate (Glc-6-P) to form trehalose-6-phosphate. Acts with retention of the anomeric configuration of the UDP-sugar donor. In Cronobacter sakazakii (strain ATCC BAA-894) (Enterobacter sakazakii), this protein is Trehalose-6-phosphate synthase.